The chain runs to 88 residues: MGTARFLRAVLLLSVLLMVTFPALLSAEHHDGRVDICRLPSDSGDCLRFFEMRYFDGTTCTKFVYGGYGGNDNRFPTEKACMKRCAKA.

An N-terminal signal peptide occupies residues 1–27 (MGTARFLRAVLLLSVLLMVTFPALLSA). A propeptide spanning residues 28–33 (EHHDGR) is cleaved from the precursor. The 49-residue stretch at 37-85 (CRLPSDSGDCLRFFEMRYFDGTTCTKFVYGGYGGNDNRFPTEKACMKRC) folds into the BPTI/Kunitz inhibitor domain. 2 disulfides stabilise this stretch: Cys-37-Cys-85 and Cys-60-Cys-81.

The protein belongs to the venom Kunitz-type family. 03 (sub-Kunitz) subfamily. As to expression, expressed by the venom gland.

Its subcellular location is the secreted. Serine protease inhibitor that inhibits trypsin at a molar ratio of 1:1. This chain is Kunitz-type U15-theraphotoxin-Hhn1i, found in Cyriopagopus hainanus (Chinese bird spider).